The primary structure comprises 345 residues: Mannonate dehydratase 2 (345 aa).

Belongs to the mannonate dehydratase family. The cofactor is Fe(2+). Mn(2+) is required as a cofactor.

It catalyses the reaction D-mannonate = 2-dehydro-3-deoxy-D-gluconate + H2O. Its pathway is carbohydrate metabolism; pentose and glucuronate interconversion. Functionally, catalyzes the dehydration of D-mannonate. This is Mannonate dehydratase 2 (uxuA2) from Halalkalibacterium halodurans (strain ATCC BAA-125 / DSM 18197 / FERM 7344 / JCM 9153 / C-125) (Bacillus halodurans).